The chain runs to 374 residues: DNA-directed RNA polymerase subunit alpha (374 aa).

The segment at 1–270 is alpha N-terminal domain (alpha-NTD); sequence MIFDEDSSSV…DQFQQFINFD (270 aa). The interval 282–374 is alpha C-terminal domain (alpha-CTD); it reads KDVLPYDSNL…ESLSKQYSEE (93 aa).

This sequence belongs to the RNA polymerase alpha chain family. Homodimer. The RNAP catalytic core consists of 2 alpha, 1 beta, 1 beta' and 1 omega subunit. When a sigma factor is associated with the core the holoenzyme is formed, which can initiate transcription.

The enzyme catalyses RNA(n) + a ribonucleoside 5'-triphosphate = RNA(n+1) + diphosphate. In terms of biological role, DNA-dependent RNA polymerase catalyzes the transcription of DNA into RNA using the four ribonucleoside triphosphates as substrates. The chain is DNA-directed RNA polymerase subunit alpha from Ehrlichia ruminantium (strain Welgevonden).